We begin with the raw amino-acid sequence, 878 residues long: MTVTPMMAQYLDLKAEYADALLFYRMGDFYEMFFEDAVAAAEALDIALTKRGKHDGADIPMCGVPVHSAEGYLLTLIRKRFRVAVCEQMESPAEAKKRGSKSVVKRDVVRLVTPGTLTEETLLDARRNNYLTSFAQVRDAKALAWTDISTGAFHVMPLTALKLGPELARLAPSELICSESAENDLREVAEDFGIALTGLARAAFDSTSAEQRICDLFGVETLDSYGSFTRAEVAAMGGIIQYLDITQKGKLPLLRPPQRETENRTIQIDAATRRNLELTQALSGGRAGSLLAVIDRTITAAGGRLMSARIASPSRDLETITNRLDAVSFAQDHHDLCGALRDHLRKVPDLDRALSRLSLDRGGPRDMAAIRNGLTQSAILFETLGSHELPPLLADALNDLSRHDNLIDRLDATLVAEPPLLARDGGFIATGFDAELDEARSLRDEGRSVIARMQQEFAALTGITSLKIKHNNVLGYFIETTATHAEKMLSPPMSETFIHRQTTANQVRFTTVELSELETKILNAGGRALEIEKRLYETLKSDILACSARIAQTASALAELDLTTALATLATTDGWVRPKVDDSRAFAIENGRHPVVENALRQQSGDPFIANDCDLSAEEDAAQIYLLTGPNMAGKSTYLRQNAIIALLAQMGSFVPASCAHIGLISQLFSRVGASDDLARGRSTFMVEMVETAAILNQADDRALVILDEIGRGTATYDGLSIAWATLEHLHDVNKSRALFATHYHEMTALAGKLPGVENATVTVKEWEGEVIFLHEVKMGAADRSYGVQVAQLAGLPPAVISRARAVLDMLEKGEREGGATQKTLIDDLPLFSVAPAPAPAPAKTSDVEARLAEIHPDELTPKQALELLYQLKEAANP.

629–636 (GPNMAGKS) provides a ligand contact to ATP.

This sequence belongs to the DNA mismatch repair MutS family.

Functionally, this protein is involved in the repair of mismatches in DNA. It is possible that it carries out the mismatch recognition step. This protein has a weak ATPase activity. The polypeptide is DNA mismatch repair protein MutS (Roseobacter denitrificans (strain ATCC 33942 / OCh 114) (Erythrobacter sp. (strain OCh 114))).